The sequence spans 1003 residues: Serine/threonine-protein kinase spk-1 (1003 aa).

3 disordered regions span residues 92 to 112 (NSTN…TQNE), 169 to 309 (NEND…SATS), and 337 to 408 (RPSI…KRGG). A compositionally biased stretch (acidic residues) spans 202–211 (SDEEDVESQD). The span at 248 to 265 (SNDDKNEKDVLVDEDTSK) shows a compositional bias: basic and acidic residues. Residues 285-300 (TIDSSVSSSTSSSSTG) show a composition bias toward low complexity. Residues 346-359 (KKTEVNANEERLDD) are compositionally biased toward basic and acidic residues. In terms of domain architecture, Protein kinase spans 422 to 904 (YHVIRKLGWG…AKIALKHPFL (483 aa)). ATP is bound by residues 428–436 (LGWGHFSTV) and Lys-451. The Proton acceptor role is filled by Asp-555. Residues 927–1003 (DGLIPEPFDG…DIERFQLDLQ (77 aa)) are disordered. The span at 936 to 953 (GNEHQEVYRDENDSRSAS) shows a compositional bias: basic and acidic residues. A compositionally biased stretch (low complexity) spans 954 to 964 (ERSANSRSAGG). Over residues 983-992 (VITNNETTDI) the composition is skewed to polar residues. Residues 994–1003 (DIERFQLDLQ) are compositionally biased toward basic and acidic residues.

It belongs to the protein kinase superfamily. Ser/Thr protein kinase family. Interacts with rsp-3. Predominantly coexpressed with rsp-3 in adult hermaphrodite germlines.

The enzyme catalyses L-seryl-[protein] + ATP = O-phospho-L-seryl-[protein] + ADP + H(+). It carries out the reaction L-threonyl-[protein] + ATP = O-phospho-L-threonyl-[protein] + ADP + H(+). Functionally, required for embryogenesis and germline development in both adult hermaphrodites and males. SR-protein kinase (SRPK) that binds directly to and phosphorylates the RS domain of rsp-3/CeSF2 in vitro. The polypeptide is Serine/threonine-protein kinase spk-1 (spk-1) (Caenorhabditis elegans).